The sequence spans 388 residues: Chorismate synthase (388 aa).

Residues Arg39 and Arg45 each contribute to the NADP(+) site. Residues 130–132, 251–252, Gly296, 311–315, and Arg337 contribute to the FMN site; these read RSS, NA, and KPIPT.

Belongs to the chorismate synthase family. Homotetramer. The cofactor is FMNH2.

It catalyses the reaction 5-O-(1-carboxyvinyl)-3-phosphoshikimate = chorismate + phosphate. It participates in metabolic intermediate biosynthesis; chorismate biosynthesis; chorismate from D-erythrose 4-phosphate and phosphoenolpyruvate: step 7/7. Catalyzes the anti-1,4-elimination of the C-3 phosphate and the C-6 proR hydrogen from 5-enolpyruvylshikimate-3-phosphate (EPSP) to yield chorismate, which is the branch point compound that serves as the starting substrate for the three terminal pathways of aromatic amino acid biosynthesis. This reaction introduces a second double bond into the aromatic ring system. The protein is Chorismate synthase of Streptococcus pyogenes serotype M49 (strain NZ131).